Consider the following 154-residue polypeptide: UPF0178 protein Gbem_2221 (154 aa).

Belongs to the UPF0178 family.

This Citrifermentans bemidjiense (strain ATCC BAA-1014 / DSM 16622 / JCM 12645 / Bem) (Geobacter bemidjiensis) protein is UPF0178 protein Gbem_2221.